A 547-amino-acid polypeptide reads, in one-letter code: Chaperonin GroEL (547 aa).

ATP is bound by residues 29–32 (TLGP), 86–90 (DGTTT), G413, 479–481 (NAA), and D495.

It belongs to the chaperonin (HSP60) family. As to quaternary structure, forms a cylinder of 14 subunits composed of two heptameric rings stacked back-to-back. Interacts with the co-chaperonin GroES.

It localises to the cytoplasm. The catalysed reaction is ATP + H2O + a folded polypeptide = ADP + phosphate + an unfolded polypeptide.. Its function is as follows. Together with its co-chaperonin GroES, plays an essential role in assisting protein folding. The GroEL-GroES system forms a nano-cage that allows encapsulation of the non-native substrate proteins and provides a physical environment optimized to promote and accelerate protein folding. The chain is Chaperonin GroEL from Synechococcus sp. (strain RCC307).